The sequence spans 233 residues: Purine nucleoside phosphorylase DeoD-type (233 aa).

H4 contacts a purine D-ribonucleoside. Residues G20, R24, R43, and R87–T90 contribute to the phosphate site. A purine D-ribonucleoside contacts are provided by residues E179 to E181 and S203 to D204. The Proton donor role is filled by D204.

This sequence belongs to the PNP/UDP phosphorylase family. As to quaternary structure, homohexamer; trimer of homodimers.

The catalysed reaction is a purine D-ribonucleoside + phosphate = a purine nucleobase + alpha-D-ribose 1-phosphate. The enzyme catalyses a purine 2'-deoxy-D-ribonucleoside + phosphate = a purine nucleobase + 2-deoxy-alpha-D-ribose 1-phosphate. In terms of biological role, catalyzes the reversible phosphorolytic breakdown of the N-glycosidic bond in the beta-(deoxy)ribonucleoside molecules, with the formation of the corresponding free purine bases and pentose-1-phosphate. This is Purine nucleoside phosphorylase DeoD-type from Helicobacter pylori (strain ATCC 700392 / 26695) (Campylobacter pylori).